The primary structure comprises 194 residues: Peptidyl-tRNA hydrolase (194 aa).

Position 17 (tyrosine 17) interacts with tRNA. Histidine 22 (proton acceptor) is an active-site residue. Positions 68, 70, and 116 each coordinate tRNA.

The protein belongs to the PTH family. As to quaternary structure, monomer.

It is found in the cytoplasm. It carries out the reaction an N-acyl-L-alpha-aminoacyl-tRNA + H2O = an N-acyl-L-amino acid + a tRNA + H(+). In terms of biological role, hydrolyzes ribosome-free peptidyl-tRNAs (with 1 or more amino acids incorporated), which drop off the ribosome during protein synthesis, or as a result of ribosome stalling. Its function is as follows. Catalyzes the release of premature peptidyl moieties from peptidyl-tRNA molecules trapped in stalled 50S ribosomal subunits, and thus maintains levels of free tRNAs and 50S ribosomes. This is Peptidyl-tRNA hydrolase from Histophilus somni (strain 2336) (Haemophilus somnus).